Here is a 455-residue protein sequence, read N- to C-terminus: MKRLLVLCDCLWAWSLLLNALTERSYGQTSSQDELKDNTTVFTRILDRLLDGYDNRLRPGLGERVTEVKTDIFVTSFGPVSDHDMEYTIDVFFRQSWKDERLKFKGPMTVLRLNNLMASKIWTPDTFFHNGKKSVAHNMTMPNKLLRITEDGTLLYTMRLTVRAECPMHLEDFPMDVHACPLKFGSYAYTRAEVVYEWTREPARSVVVAEDGSRLNQYDLLGQTVDSGIVQSSTGEYVVMTTHFHLKRKIGYFVIQTYLPCIMTVILSQVSFWLNRESVPARTVFGVTTVLTMTTLSISARNSLPKVAYATAMDWFIAVCYAFVFSALIEFATVNYFTKRGYAWDGKSVVPEKPKKVKDPLIKKNNTYTAAATSYTPNIARDPGLATIAKSATIEPKEVKPETKPAEPKKTFNSVSKIDRLSRIAFPLLFGIFNLVYWATYLNREPQLKAPTPHQ.

An N-terminal signal peptide occupies residues 1–27; that stretch reads MKRLLVLCDCLWAWSLLLNALTERSYG. The Extracellular portion of the chain corresponds to 28–253; the sequence is QTSSQDELKD…FHLKRKIGYF (226 aa). The N-linked (GlcNAc...) asparagine glycan is linked to Asn38. Arg94 provides a ligand contact to 4-aminobutanoate. Asn138 carries an N-linked (GlcNAc...) asparagine glycan. Residue Thr157 coordinates 4-aminobutanoate. Cys166 and Cys180 are joined by a disulfide. Residues 254-274 form a helical membrane-spanning segment; it reads VIQTYLPCIMTVILSQVSFWL. Residues 275–279 are Cytoplasmic-facing; that stretch reads NRESV. The chain crosses the membrane as a helical span at residues 280–301; that stretch reads PARTVFGVTTVLTMTTLSISAR. The Extracellular segment spans residues 302-311; it reads NSLPKVAYAT. A helical transmembrane segment spans residues 312–333; that stretch reads AMDWFIAVCYAFVFSALIEFAT. Topologically, residues 334–420 are cytoplasmic; sequence VNYFTKRGYA…TFNSVSKIDR (87 aa). Residues 421–440 form a helical membrane-spanning segment; the sequence is LSRIAFPLLFGIFNLVYWAT. At 441 to 455 the chain is on the extracellular side; that stretch reads YLNREPQLKAPTPHQ.

The protein belongs to the ligand-gated ion channel (TC 1.A.9) family. Gamma-aminobutyric acid receptor (TC 1.A.9.5) subfamily. GABRA1 sub-subfamily. As to quaternary structure, heteropentamer, formed by a combination of alpha (GABRA1-6), beta (GABRB1-3), gamma (GABRG1-3), delta (GABRD), epsilon (GABRE), rho (GABRR1-3), pi (GABRP) and theta (GABRQ) subunits, each subunit exhibiting distinct physiological and pharmacological properties. In terms of tissue distribution, brain.

It localises to the postsynaptic cell membrane. It is found in the cell membrane. The enzyme catalyses chloride(in) = chloride(out). Allosterically activated by benzodiazepines, the neuroanesthetic alphaxalone and pentobarbital. Inhibited by the antagonist bicuculline. Potentiated by histamine. Functionally, alpha subunit of the heteropentameric ligand-gated chloride channel gated by gamma-aminobutyric acid (GABA), a major inhibitory neurotransmitter in the brain. GABA-gated chloride channels, also named GABA(A) receptors (GABAAR), consist of five subunits arranged around a central pore and contain GABA active binding site(s) located at the alpha and beta subunit interface(s). When activated by GABA, GABAARs selectively allow the flow of chloride anions across the cell membrane down their electrochemical gradient. Chloride influx into the postsynaptic neuron following GABAAR opening decreases the neuron ability to generate a new action potential, thereby reducing nerve transmission. The GABAARs can also initiate the formation of functional inhibitory GABAergic synapses. GABAARs function also as histamine receptor where histamine binds at the interface of two neighboring beta subunits and potentiates GABA response. This Gallus gallus (Chicken) protein is Gamma-aminobutyric acid receptor subunit alpha-1 (GABRA1).